The sequence spans 526 residues: DNA polymerase epsilon subunit B (526 aa).

The protein belongs to the DNA polymerase epsilon subunit B family. As to quaternary structure, subunit of the DNA polymerase II. Interacts with POL2A (via C-terminus).

The protein localises to the nucleus. Functionally, as accessory component of DNA polymerase II participates in chromosomal DNA replication. Required for the timing and determination of cell fate during plant embryogenesis and root pole development, by promoting cell cycle and cell type patterning. Necessary for proper shoot (SAM) and root apical meristem (RAM) functions. Is essential to promote the first divisions of the zygote. In Arabidopsis thaliana (Mouse-ear cress), this protein is DNA polymerase epsilon subunit B.